Reading from the N-terminus, the 421-residue chain is MKVLPAKKVEGVLSVPPDKSITHRALILSALAESESTLYNLLRCLDTERTHDILEKLGTRFEGDWEKMKVFPKPFAEPIEPLFCGNSGTTTRLMSGVLASYEMFTVLYGDSSLSRRPMRRVIEPLEMMGARFMARQNNYLPMAIKGNHLSGISYKTPVASAQVKSAVLLAGLRASGRTIVIEPAKSRDHTERMLKNLGVPVEVEGTRVVLEPATFRGFTMKVPGDISSAAFFVVLGAIHPNARITVTDVGLNPTRTGLLEVMKLMGANLEWEITEENLEPIGTVRVETSPNLKGVVVPEHLVPLMIDELPLVALLGVFAEGETVVRNAEELRKKESDRIRVLVENFKRLGVEIEEFKDGFKIVGKQSIKGGSVDPEGDHRMAMLFSIAGLVSEEGVDVKDHECVAVSFPNFYELLERVVIS.

The 3-phosphoshikimate site is built by lysine 19, serine 20, and arginine 24. Lysine 19 contacts phosphoenolpyruvate. Residues glycine 88 and arginine 116 each contribute to the phosphoenolpyruvate site. Positions 160, 162, 307, and 334 each coordinate 3-phosphoshikimate. A phosphoenolpyruvate-binding site is contributed by glutamine 162. Aspartate 307 (proton acceptor) is an active-site residue. The phosphoenolpyruvate site is built by arginine 338 and arginine 380.

Belongs to the EPSP synthase family. Monomer.

It localises to the cytoplasm. The catalysed reaction is 3-phosphoshikimate + phosphoenolpyruvate = 5-O-(1-carboxyvinyl)-3-phosphoshikimate + phosphate. It participates in metabolic intermediate biosynthesis; chorismate biosynthesis; chorismate from D-erythrose 4-phosphate and phosphoenolpyruvate: step 6/7. Catalyzes the transfer of the enolpyruvyl moiety of phosphoenolpyruvate (PEP) to the 5-hydroxyl of shikimate-3-phosphate (S3P) to produce enolpyruvyl shikimate-3-phosphate and inorganic phosphate. This is 3-phosphoshikimate 1-carboxyvinyltransferase from Thermotoga neapolitana (strain ATCC 49049 / DSM 4359 / NBRC 107923 / NS-E).